A 130-amino-acid chain; its full sequence is Small ribosomal subunit protein uS9 (130 aa).

Belongs to the universal ribosomal protein uS9 family.

The polypeptide is Small ribosomal subunit protein uS9 (Syntrophobacter fumaroxidans (strain DSM 10017 / MPOB)).